The following is a 209-amino-acid chain: MSKNKVSASSGRWLKEHFDDKYVLEAQKRGYRSRAIFKIEEIQNKDKLLKPGMTVVDLGAAPGGWSQYAVEQVGDEGQVIACDILPMDSIAGVSFLQGDFREEAVLDALLERIQPDMVDVVMSDMAPNMSGNLAVDQPRAMYLVELALDMCRQVLAPNGSFTVKVFQGEGFDQYLQEVRNMFKVVKIRKPDSSRARSREVYIVATGYKG.

Positions 63, 65, 83, 99, and 124 each coordinate S-adenosyl-L-methionine. The Proton acceptor role is filled by K164.

This sequence belongs to the class I-like SAM-binding methyltransferase superfamily. RNA methyltransferase RlmE family.

The protein localises to the cytoplasm. It carries out the reaction uridine(2552) in 23S rRNA + S-adenosyl-L-methionine = 2'-O-methyluridine(2552) in 23S rRNA + S-adenosyl-L-homocysteine + H(+). Functionally, specifically methylates the uridine in position 2552 of 23S rRNA at the 2'-O position of the ribose in the fully assembled 50S ribosomal subunit. This chain is Ribosomal RNA large subunit methyltransferase E, found in Aliivibrio fischeri (strain ATCC 700601 / ES114) (Vibrio fischeri).